We begin with the raw amino-acid sequence, 487 residues long: MTELFIDGAWRDGAGPVFASRNPGTGEPVWEGAGASADDVERAVASARRAFAAWSALDLDARCAIVKRFAALLVERKEALATMIGRETGKPLWEARTEVASMAAKVDVSIAAYHERTGERRSPTADGVAVLRHRPHGVVAVFGPYNFPGHLPNGHIVPALIAGNTVVFKPSELAPGVARATVEIWRDAGLPAGVLNLVQGEKDTGVALANHRQIDGLFFTGSSDTGTLLHRQFGGRPEIVLALEMGGNNPLVVADVEDIDAAVHHAIQSAFLSAGQRCTCARRILVPRGAFGDRFLERFADVASRITADVYDADPQPFMGAVISARAASRLVAAQAKLLELGAAPIIEMRQRDPALGFVNASILDVTPVRELPDEEHFGPLAQIVRYTDLDDAIARANDTAFGLSAGLLADDETVWNTFRRAIRAGIVNWNRPTNGASSAAPFGGAGRSGNHRPSAYYAADYCAYPMASVESAQLQMPANLSPGLHF.

Residue 221 to 226 (GSSDTG) participates in NAD(+) binding. Catalysis depends on residues Glu244 and Cys278.

Belongs to the aldehyde dehydrogenase family. AstD subfamily.

The enzyme catalyses N-succinyl-L-glutamate 5-semialdehyde + NAD(+) + H2O = N-succinyl-L-glutamate + NADH + 2 H(+). Its pathway is amino-acid degradation; L-arginine degradation via AST pathway; L-glutamate and succinate from L-arginine: step 4/5. Catalyzes the NAD-dependent reduction of succinylglutamate semialdehyde into succinylglutamate. This chain is N-succinylglutamate 5-semialdehyde dehydrogenase, found in Burkholderia pseudomallei (strain 1106a).